The chain runs to 81 residues: MKASMFLALAGLVLLFVVCYASESEEKEFPRELLSTIFAVDDFKGEERECLGIFKACTPGKNECCSNRVCSGKTRWSKWKL.

The signal sequence occupies residues 1 to 21 (MKASMFLALAGLVLLFVVCYA). Positions 22 to 48 (SESEEKEFPRELLSTIFAVDDFKGEER) are excised as a propeptide. Cystine bridges form between C50–C65 and C57–C70.

The protein belongs to the neurotoxin 10 (Hwtx-1) family. 51 (Hntx-8) subfamily. Expressed by the venom gland.

It localises to the secreted. Binds to the nicotinic acetylcholine receptor. Blocks neuromuscular transmission. This is U6-theraphotoxin-Hs1a from Cyriopagopus schmidti (Chinese bird spider).